The primary structure comprises 216 residues: Adenylate kinase (216 aa).

Position 11–16 (11–16 (GSGKGT)) interacts with ATP. Positions 31–60 (ATGDLFRKAIECGDELGDTVKSYMERGELV) are NMP. Residues Thr-32, Arg-37, 58–60 (ELV), 86–89 (GFPR), and Gln-93 each bind AMP. The tract at residues 127-163 (GRWVCRSCQSPYQSGCAEVTKGKCSRCQGELYQRPDD) is LID. Arg-128 is an ATP binding site. The Zn(2+) site is built by Cys-131, Cys-134, Cys-150, and Cys-153. AMP is bound by residues Arg-160 and Arg-171. Ala-199 contributes to the ATP binding site.

Belongs to the adenylate kinase family. As to quaternary structure, monomer.

The protein localises to the cytoplasm. It carries out the reaction AMP + ATP = 2 ADP. Its pathway is purine metabolism; AMP biosynthesis via salvage pathway; AMP from ADP: step 1/1. Functionally, catalyzes the reversible transfer of the terminal phosphate group between ATP and AMP. Plays an important role in cellular energy homeostasis and in adenine nucleotide metabolism. The chain is Adenylate kinase from Dehalococcoides mccartyi (strain ATCC BAA-2100 / JCM 16839 / KCTC 5957 / BAV1).